Consider the following 962-residue polypeptide: MSETNPAAASEVAAPHRYTAAVAAEIEARWQDFWDAEGTYEAPNPTGDLAGGPALVAKPKKFVMDMFPYPSGAGLHVGHPLGYIATDVFARFQRMTGHNVLHTLGFDAFGLPAEQYAVQTGTHPRVSTEANIENMKVQLRRLGLGHDKRRSFATIDPDYYKWTQWIFLQIFNSWYDEEANKARPIAELVAQFESGERAVPRADGATRAWRELTAAERADVLGEYRLAYASEAPVNWSPGLGTVLANEEVTADGRSERGNFPVFKAKLRQWNMRITAYADRLLDDLDALDWPEAIKLQQRNWIGRSEGARVDFPIDGEAVTVFTTRPDTLFGATYMVLAPEHPLVEKFTPAAWPEGTHDVWTGGHATPAEAVAAYRAQAASKSDVERQAEAKDKTGVFTGAYATNPVSGEQVPVFIADYVLMGYGTGAIMAVPAHDTRDFAFARAFELSMRCVVEPSDDRGTDPSTWDDAFASYDAKIVNSSSGEISLDGLGVVEAKARITEWLERKGLGEGTVNFRLRDWLFSRQRYWGEPFPIVYDEDGIAHALPESMLPLELPEVEDYSPRTFDPDDANTSPETPLSRNEDWVNVTLDLGDGRGPQKYRRETNTMPNWAGSCWYELRYLDPHNDQKLVDPAIEQYWMGPREGQPTGGVDLYVGGAEHAVLHLLYARFWSKVLFDLGHISSAEPFHKLFNQGMIQAYVYRDSRGIAVPAAEVEERDGAYYYQGEKVSRLLGKMGKSLKNAVTPDEICAEYGADTLRLYEMAMGPLDVSRPWDTRAVVGQFRLLQRLWRNVVDEATGEVTVVDAEPDEETLRALHKAIDGVRQDLEGMRFNTAIAKVTELNNQLTKAGGPVPRTVAESLVLLVAPLAPHIAEELWRKLGHNDSVVHQDFPVADPAYVVDEAVTCVVQIKGKVKARLEVSPAISEEELEKVALADEKVVAALGGAGIRKVIVRAPKLVNIVTA.

Positions 68–79 (PYPSGAGLHVGH) match the 'HIGH' region motif. Positions 559 to 582 (DYSPRTFDPDDANTSPETPLSRNE) are disordered. Residues 570–579 (ANTSPETPLS) show a composition bias toward polar residues. The 'KMSKS' region signature appears at 733 to 737 (KMGKS). K736 serves as a coordination point for ATP.

Belongs to the class-I aminoacyl-tRNA synthetase family.

The protein localises to the cytoplasm. It catalyses the reaction tRNA(Leu) + L-leucine + ATP = L-leucyl-tRNA(Leu) + AMP + diphosphate. This is Leucine--tRNA ligase from Streptomyces avermitilis (strain ATCC 31267 / DSM 46492 / JCM 5070 / NBRC 14893 / NCIMB 12804 / NRRL 8165 / MA-4680).